We begin with the raw amino-acid sequence, 161 residues long: Endoribonuclease YbeY (161 aa).

Zn(2+) is bound by residues H120, H124, and D130.

It belongs to the endoribonuclease YbeY family. The cofactor is Zn(2+).

Its subcellular location is the cytoplasm. In terms of biological role, single strand-specific metallo-endoribonuclease involved in late-stage 70S ribosome quality control and in maturation of the 3' terminus of the 16S rRNA. This is Endoribonuclease YbeY from Chlamydia trachomatis serovar A (strain ATCC VR-571B / DSM 19440 / HAR-13).